The primary structure comprises 146 residues: Anti-sigma F factor (146 aa).

This sequence belongs to the anti-sigma-factor family.

It carries out the reaction L-seryl-[protein] + ATP = O-phospho-L-seryl-[protein] + ADP + H(+). The enzyme catalyses L-threonyl-[protein] + ATP = O-phospho-L-threonyl-[protein] + ADP + H(+). Binds to sigma F and blocks its ability to form an RNA polymerase holoenzyme (E-sigma F). Phosphorylates SpoIIAA on a serine residue. This phosphorylation may enable SpoIIAA to act as an anti-anti-sigma factor that counteracts SpoIIAB and thus releases sigma F from inhibition. The sequence is that of Anti-sigma F factor from Bacillus cereus (strain ATCC 14579 / DSM 31 / CCUG 7414 / JCM 2152 / NBRC 15305 / NCIMB 9373 / NCTC 2599 / NRRL B-3711).